The primary structure comprises 129 residues: Lysozyme C (129 aa).

In terms of domain architecture, C-type lysozyme spans 1–129 (KVYGRCELAA…VHAWIRGCRL (129 aa)). Disulfide bonds link Cys6/Cys127, Cys30/Cys115, Cys64/Cys80, and Cys76/Cys94. Catalysis depends on residues Glu35 and Asp52.

It belongs to the glycosyl hydrolase 22 family. In terms of assembly, monomer.

It is found in the secreted. It carries out the reaction Hydrolysis of (1-&gt;4)-beta-linkages between N-acetylmuramic acid and N-acetyl-D-glucosamine residues in a peptidoglycan and between N-acetyl-D-glucosamine residues in chitodextrins.. Its function is as follows. Lysozymes have primarily a bacteriolytic function; those in tissues and body fluids are associated with the monocyte-macrophage system and enhance the activity of immunoagents. The polypeptide is Lysozyme C (LYZ) (Tragopan temminckii (Temminck's tragopan)).